The primary structure comprises 475 residues: Adenylyl cyclase-associated protein 1 (475 aa).

An N-acetylalanine modification is found at Ala-2. Tyr-31 carries the phosphotyrosine modification. A Phosphoserine modification is found at Ser-34. Lys-81 is modified (N6-acetyllysine). Disordered stretches follow at residues 216-237 (ELSG…PPCP) and 278-319 (MKTH…KKEP). Residues 218-228 (SGLPSGPSAGS) show a composition bias toward low complexity. Position 287 is an N6-methyllysine (Lys-287). Phosphoserine is present on residues Ser-290, Ser-295, and Ser-301. At Thr-307 the chain carries Phosphothreonine. 2 positions are modified to phosphoserine: Ser-308 and Ser-310. In terms of domain architecture, C-CAP/cofactor C-like spans 319–453 (PAVLELEGKK…EGGDFNEFPV (135 aa)). Lys-348 is covalently cross-linked (Glycyl lysine isopeptide (Lys-Gly) (interchain with G-Cter in SUMO1)).

The protein belongs to the CAP family. Homodimer. Binds actin monomers.

The protein localises to the cell membrane. In terms of biological role, directly regulates filament dynamics and has been implicated in a number of complex developmental and morphological processes, including mRNA localization and the establishment of cell polarity. The sequence is that of Adenylyl cyclase-associated protein 1 (CAP1) from Homo sapiens (Human).